The chain runs to 247 residues: C-type lectin domain family 7 member A (247 aa).

The Cytoplasmic segment spans residues Met-1–Arg-44. An ITAM-like motif is present at residues Tyr-15–Leu-18. The chain crosses the membrane as a helical; Signal-anchor for type II membrane protein span at residues Leu-45–Ser-65. At Thr-66–Val-247 the chain is on the extracellular side. Over residues Ser-81–Glu-101 the composition is skewed to polar residues. A disordered region spans residues Ser-81–Ser-103. Residue Asn-91 is glycosylated (N-linked (GlcNAc...) asparagine). 3 disulfide bridges follow: Cys-120/Cys-131, Cys-148/Cys-241, and Cys-220/Cys-233. Residues His-127 to Glu-242 enclose the C-type lectin domain. A (1,3-beta-D-glucosyl)n-binding site is contributed by Arg-146–Ser-153. A divalent metal cation-binding residues include Lys-157, Asp-159, and Glu-163. Glu-195 provides a ligand contact to (1,3-beta-D-glucosyl)n. Glu-242 is an a divalent metal cation binding site.

In terms of assembly, homodimer. Interacts with SYK; participates in leukocyte activation in presence of fungal pathogens. Interacts with CD37; this interaction controls CLEC7A-mediated IL-6 production. Post-translationally, phosphorylated on tyrosine residues in response to beta-glucan binding. Detected in bone marrow, monocytes, macrophages, dendritic cells and natural killer cells.

It localises to the cell membrane. In terms of biological role, lectin that functions as a pattern recognizing receptor (PRR) specific for beta-1,3-linked and beta-1,6-linked glucans, which constitute cell wall constituents from pathogenic bacteria and fungi. Necessary for the TLR2-mediated inflammatory response and activation of NF-kappa-B: upon beta-glucan binding, recruits SYK via its ITAM motif and promotes a signaling cascade that activates some CARD domain-BCL10-MALT1 (CBM) signalosomes, leading to the activation of NF-kappa-B and MAP kinase p38 (MAPK11, MAPK12, MAPK13 and/or MAPK14) pathways which stimulate expression of genes encoding pro-inflammatory cytokines and chemokines. Enhances cytokine production in macrophages and dendritic cells. Mediates production of reactive oxygen species in the cell. Mediates phagocytosis of C.albicans conidia. Binds T-cells in a way that does not involve their surface glycans and plays a role in T-cell activation. Stimulates T-cell proliferation. Induces phosphorylation of SCIMP after binding beta-glucans. The polypeptide is C-type lectin domain family 7 member A (CLEC7A) (Bos taurus (Bovine)).